Reading from the N-terminus, the 416-residue chain is MLQHPATDFYDLAAANAAAVLTARHTPPYSPTGLSGSVALHNNNNNNSSTSNNNNSTLDIMAHNGGGAGGGLHLNSSSNGGGGGGVVSGGGSGGRENLPSFGFTQEQVACVCEVLQQAGNIERLGRFLWSLPQCDKLQLNESVLKAKAVVAFHRGQYKELYRLLEHHHFSAQNHAKLQALWLKAHYVEAEKLRGRPLGAVGKYRVRRKFPLPRTIWDGEETSYCFKEKSRSVLRDWYSHNPYPSPREKRDLAEATGLTTTQVSNWFKNRRQRDRAAEHKDGSTDKQHLDSSSDSEMEGSMLPSQSAQHQQQQQQQQHSPGNSSGNNNGLHQQQLQHVAAEQGLQHHPHQPHPASNIANVAATKSSGGGGGGGVSAAAAAQMQMPPLTAAVAYSHLHSVMGAMPMTAMYDMGEYQHL.

Disordered stretches follow at residues 32 to 91 (TGLS…SGGG) and 262 to 329 (VSNW…NNGL). The segment covering 42-57 (NNNNNNSSTSNNNNST) has biased composition (low complexity). Residues 79 to 91 (NGGGGGGVVSGGG) are compositionally biased toward gly residues. A DNA-binding region (homeobox) is located at residues 218–277 (GEETSYCFKEKSRSVLRDWYSHNPYPSPREKRDLAEATGLTTTQVSNWFKNRRQRDRAAE). The segment covering 273–290 (DRAAEHKDGSTDKQHLDS) has biased composition (basic and acidic residues). Residues 291–329 (SSDSEMEGSMLPSQSAQHQQQQQQQQHSPGNSSGNNNGL) show a composition bias toward low complexity.

Belongs to the SIX/Sine oculis homeobox family. In developing embryos, expressed in the eye disk epithelium, bolwig's organ and the optic lobe primordium at areas of invagination. In adults, present in photoreceptor cells in the apical regions of the retina, and in optic lobes.

The protein resides in the nucleus. Required for visual system development. May transcriptionally regulate genes necessary for optic lobe invagination and Bolwig's nerve formation. This Drosophila melanogaster (Fruit fly) protein is Protein sine oculis (so).